The following is a 340-amino-acid chain: tRNA N6-adenosine threonylcarbamoyltransferase (340 aa).

His-111 and His-115 together coordinate Fe cation. Substrate is bound by residues 133 to 137, Asp-166, Gly-179, Asp-183, and Asn-272; that span reads VVSGG. Fe cation is bound at residue Asp-300.

The protein belongs to the KAE1 / TsaD family. Fe(2+) is required as a cofactor.

The protein resides in the cytoplasm. The catalysed reaction is L-threonylcarbamoyladenylate + adenosine(37) in tRNA = N(6)-L-threonylcarbamoyladenosine(37) in tRNA + AMP + H(+). Functionally, required for the formation of a threonylcarbamoyl group on adenosine at position 37 (t(6)A37) in tRNAs that read codons beginning with adenine. Is involved in the transfer of the threonylcarbamoyl moiety of threonylcarbamoyl-AMP (TC-AMP) to the N6 group of A37, together with TsaE and TsaB. TsaD likely plays a direct catalytic role in this reaction. The sequence is that of tRNA N6-adenosine threonylcarbamoyltransferase from Geobacter sulfurreducens (strain ATCC 51573 / DSM 12127 / PCA).